The following is a 178-amino-acid chain: Cysteine protease inhibitor 7 (178 aa).

2 disulfides stabilise this stretch: cysteine 41/cysteine 93 and cysteine 141/cysteine 147.

It belongs to the protease inhibitor I3 (leguminous Kunitz-type inhibitor) family.

The protein resides in the vacuole. Its function is as follows. Inhibitor of cysteine proteases. May protect the plant by inhibiting proteases of invading organisms. This is Cysteine protease inhibitor 7 from Solanum tuberosum (Potato).